Reading from the N-terminus, the 438-residue chain is Protein pop-1 (438 aa).

The interval 1–39 (MMADEELGDEVKVFRRDEDADDDPMISGETSEQQLADDK) is disordered. The interval 1-45 (MMADEELGDEVKVFRRDEDADDDPMISGETSEQQLADDKKEAVME) is sufficient for interaction with beta-catenin/sys-1. The segment covering 9 to 18 (DEVKVFRRDE) has biased composition (basic and acidic residues). Residues 88-130 (AALPMFMPLFMNPYAAALRSPSLMFPMGAMSPTFPMFPPSPVY) are involved in nuclear asymmetry. A phosphoserine; by LIT1 mark is found at S118 and S127. A DNA-binding region (HMG box) is located at residues 192 to 262 (VKKPLNAFMW…THKERYPEWS (71 aa)). Residues 250–263 (DKETHKERYPEWSA) are compositionally biased toward basic and acidic residues. Disordered stretches follow at residues 250–288 (DKET…ENND), 318–351 (TDRS…PKAN), and 378–438 (TTGA…MCTI). Positions 270 to 279 (NKKKTKKRRD) are enriched in basic residues. 2 stretches are compositionally biased toward polar residues: residues 324–339 (SDIT…SGAY) and 378–395 (TTGA…SSAG). Acidic residues predominate over residues 406-418 (SESDVEEEEDEQI).

Belongs to the TCF/LEF family. As to quaternary structure, interacts (via N-terminal region) with beta-catenin homolog sys-1. Interacts with hda-1. Interacts with bar-1. Interacts with par-5; the interaction is direct and is enhanced by lit-1-mediated pop-1 phosphorylation. The interaction also leads to the subsequent nuclear export of pop-1. Interacts (when phosphorylated on Ser-118 and Ser-127) with lit-1; the interaction is dependent on the beta-catenin-lit-1 complex. Interacts with wrm-1. Interacts with homeobox protein egl-5. Interacts with zinc finger transcription factor ref-2; the interaction is direct and facilitates transcriptional activation; transcription may be repressed by beta-catenin/sys-1. Phosphorylated on Ser-118 and Ser-127 by lit-1 in the beta-catenin-lit-1 complex. Phosphorylation promotes the interaction of pop-1 and par-5 and the subsequent translocation of pop-1 from the nucleus to the cytoplasm.

Its subcellular location is the nucleus. It localises to the cytoplasm. Functionally, transcription factor. Part of the Wnt signaling asymmetry pathway. Binds to the consensus sequence, 5'-(C/T)TTTG(A/T)(A/T)(G/C)-3'. Activates or represses target gene expression, depending on upstream Wnt signals and interactions with transcription co-regulators, such as beta-catenin/sys-1 or zinc finger transcription factor ref-2. Essential for the specification of the mesodermal and endodermal cell fates in early embryos. Required in many asymmetrical cell divisions in the early embryo and during larval development. Reciprocal distribution patterns of sys-1 and pop-1 in the daughters of anterior-posterior cell divisions functions in specifying cell fate; a higher sys-1 to pop-1 ratio promotes the posterior cell fate, whereas a low sys-1 to pop-1 ratio promotes the anterior fate. Involved in modulating nuclear localization or nuclear retention of sys-1. Involved in the terminal asymmetrical division of many embryonic neuroblasts; for example in the SMDD/AIY neuron lineage. In complex with ref-2, positively modulates expression of LIM/homeobox protein ttx-3 in anterior daughter cells of the SMDD/AIY lineage. Required for asymmetrical division of somatic gonadal precursor descendants which initiate axis formation required to control organ shape. Similarly, involved in asymmetrical division of seam cells, a stem cell-like lineage. Represses expression of target genes via its interaction with hda-1 histone deacetylase. Required for specification of the M lineage-derived coelomocyte and sex myoblast fate. Regulates coelomocyte fate by positively regulating proliferation and ceh-34 and possibly eya-1 expression in M.dlpa and M.drpa precursors. The sequence is that of Protein pop-1 from Caenorhabditis elegans.